Consider the following 63-residue polypeptide: DNA gyrase inhibitor YacG (63 aa).

Zn(2+) contacts are provided by cysteine 9, cysteine 12, cysteine 28, and cysteine 32.

Belongs to the DNA gyrase inhibitor YacG family. In terms of assembly, interacts with GyrB. Zn(2+) serves as cofactor.

Its function is as follows. Inhibits all the catalytic activities of DNA gyrase by preventing its interaction with DNA. Acts by binding directly to the C-terminal domain of GyrB, which probably disrupts DNA binding by the gyrase. The polypeptide is DNA gyrase inhibitor YacG (Salmonella choleraesuis (strain SC-B67)).